The chain runs to 228 residues: MYSIKMRASHEDIHISGAETMCEFEDLENYLKKYFNKAFNHENGNIDFLNLKIEKVKAPIQTLVALPVVENLNDTLTQLAKQTGVSEYALNKGLEFIKNDITYTGAIILSAQTGQRLDSTEQRGIRVTQLAFKTCKCNGEISERVKDARALATCINAFEGVKAELCVSDDLHYTTGYFASPKLGYRRIFNIKEKGTRHGGRIIFVDEGIHLNEYVSFLETVPKEIIEK.

This sequence belongs to the BioW family. As to quaternary structure, homodimer. The cofactor is Mg(2+).

It catalyses the reaction heptanedioate + ATP + CoA = 6-carboxyhexanoyl-CoA + AMP + diphosphate. The protein operates within metabolic intermediate metabolism; pimeloyl-CoA biosynthesis; pimeloyl-CoA from pimelate: step 1/1. In terms of biological role, catalyzes the transformation of pimelate into pimeloyl-CoA with concomitant hydrolysis of ATP to AMP. This Staphylococcus epidermidis (strain ATCC 12228 / FDA PCI 1200) protein is 6-carboxyhexanoate--CoA ligase.